Consider the following 369-residue polypeptide: Biglycan (369 aa).

A signal peptide spans 1-16 (MWPLWPLAALLALSQA). The propeptide occupies 17 to 37 (LPFEQKAFWDFTLDDGLPMLN). 2 O-linked (Xyl...) (glycosaminoglycan) serine glycosylation sites follow: Ser42 and Ser48. Intrachain disulfides connect Cys64/Cys70 and Cys68/Cys77. LRR repeat units lie at residues 83-103 (KAVP…NNDI), 104-127 (SELR…NNKI), 128-151 (SKIH…KNHL), 152-172 (VEIP…DNRI), 173-196 (RKVP…GNPL), 197-221 (ENSG…EAKL), 222-242 (TGIP…HNKI), 243-266 (QAIE…HNQI), 267-290 (RMIE…NNKL), 291-313 (SRVP…TNNI), 314-343 (TKVG…NNPV), and 344-369 (PYWE…NYKK). 2 O-linked (Xyl...) (glycosaminoglycan) serine glycosylation sites follow: Ser181 and Ser199. Asn271 and Asn312 each carry an N-linked (GlcNAc...) asparagine glycan. Residues Cys322 and Cys355 are joined by a disulfide bond.

It belongs to the small leucine-rich proteoglycan (SLRP) family. SLRP class I subfamily. In terms of assembly, homodimer. Forms a ternary complex with MFAP2 and ELN. In terms of processing, the two attached glycosaminoglycan chains can be either chondroitin sulfate or dermatan sulfate. In terms of tissue distribution, found in several connective tissues, especially in articular cartilages.

The protein localises to the secreted. It is found in the extracellular space. It localises to the extracellular matrix. Functionally, may be involved in collagen fiber assembly. In Bos taurus (Bovine), this protein is Biglycan (BGN).